Reading from the N-terminus, the 474-residue chain is Aspartyl/glutamyl-tRNA(Asn/Gln) amidotransferase subunit B (474 aa).

The protein belongs to the GatB/GatE family. GatB subfamily. As to quaternary structure, heterotrimer of A, B and C subunits.

The enzyme catalyses L-glutamyl-tRNA(Gln) + L-glutamine + ATP + H2O = L-glutaminyl-tRNA(Gln) + L-glutamate + ADP + phosphate + H(+). The catalysed reaction is L-aspartyl-tRNA(Asn) + L-glutamine + ATP + H2O = L-asparaginyl-tRNA(Asn) + L-glutamate + ADP + phosphate + 2 H(+). Functionally, allows the formation of correctly charged Asn-tRNA(Asn) or Gln-tRNA(Gln) through the transamidation of misacylated Asp-tRNA(Asn) or Glu-tRNA(Gln) in organisms which lack either or both of asparaginyl-tRNA or glutaminyl-tRNA synthetases. The reaction takes place in the presence of glutamine and ATP through an activated phospho-Asp-tRNA(Asn) or phospho-Glu-tRNA(Gln). This is Aspartyl/glutamyl-tRNA(Asn/Gln) amidotransferase subunit B from Lactiplantibacillus plantarum (strain ATCC BAA-793 / NCIMB 8826 / WCFS1) (Lactobacillus plantarum).